Reading from the N-terminus, the 144-residue chain is Nucleoside diphosphate kinase (144 aa).

ATP is bound by residues Lys11, Phe59, Arg87, Thr93, Arg104, and Asn114. His117 functions as the Pros-phosphohistidine intermediate in the catalytic mechanism.

It belongs to the NDK family. As to quaternary structure, homotetramer. It depends on Mg(2+) as a cofactor.

It is found in the cytoplasm. The catalysed reaction is a 2'-deoxyribonucleoside 5'-diphosphate + ATP = a 2'-deoxyribonucleoside 5'-triphosphate + ADP. The enzyme catalyses a ribonucleoside 5'-diphosphate + ATP = a ribonucleoside 5'-triphosphate + ADP. Major role in the synthesis of nucleoside triphosphates other than ATP. The ATP gamma phosphate is transferred to the NDP beta phosphate via a ping-pong mechanism, using a phosphorylated active-site intermediate. The protein is Nucleoside diphosphate kinase of Vibrio atlanticus (strain LGP32) (Vibrio splendidus (strain Mel32)).